Here is a 99-residue protein sequence, read N- to C-terminus: Large ribosomal subunit protein eL36 (99 aa).

The protein belongs to the eukaryotic ribosomal protein eL36 family. Component of the large ribosomal subunit. Mature ribosomes consist of a small (40S) and a large (60S) subunit. The 40S subunit contains about 32 different proteins and 1 molecule of RNA (18S). The 60S subunit contains 45 different proteins and 3 molecules of RNA (25S, 5.8S and 5S).

It is found in the cytoplasm. Functionally, component of the ribosome, a large ribonucleoprotein complex responsible for the synthesis of proteins in the cell. The small ribosomal subunit (SSU) binds messenger RNAs (mRNAs) and translates the encoded message by selecting cognate aminoacyl-transfer RNA (tRNA) molecules. The large subunit (LSU) contains the ribosomal catalytic site termed the peptidyl transferase center (PTC), which catalyzes the formation of peptide bonds, thereby polymerizing the amino acids delivered by tRNAs into a polypeptide chain. The nascent polypeptides leave the ribosome through a tunnel in the LSU and interact with protein factors that function in enzymatic processing, targeting, and the membrane insertion of nascent chains at the exit of the ribosomal tunnel. The chain is Large ribosomal subunit protein eL36 from Candida albicans (strain SC5314 / ATCC MYA-2876) (Yeast).